The primary structure comprises 114 residues: ATP synthase epsilon chain (114 aa).

Belongs to the ATPase epsilon chain family. As to quaternary structure, F-type ATPases have 2 components, CF(1) - the catalytic core - and CF(0) - the membrane proton channel. CF(1) has five subunits: alpha(3), beta(3), gamma(1), delta(1), epsilon(1). CF(0) has three main subunits: a, b and c.

It localises to the cell membrane. Functionally, produces ATP from ADP in the presence of a proton gradient across the membrane. This Wolbachia pipientis wMel protein is ATP synthase epsilon chain.